A 903-amino-acid chain; its full sequence is Dynamin-like GTPase msp1, mitochondrial (903 aa).

The N-terminal 78 residues, 1 to 78 (MGISWFLSRF…RFFSFSSISR (78 aa)), are a transit peptide targeting the mitochondrion. The chain crosses the membrane as a helical span at residues 86-103 (LPVAGFSLVAGGAAYIGA). Over residues 167 to 188 (VLQAERAKEHRSNSNDKQKSSD) the composition is skewed to basic and acidic residues. Residues 167-198 (VLQAERAKEHRSNSNDKQKSSDNDEDPNDTTV) are disordered. The helical transmembrane segment at 198 to 214 (VGIGAALAASILSVDSV) threads the bilayer. The 272-residue stretch at 260-531 (AVTLPSIVVI…LEYTMSKNLQ (272 aa)) folds into the Dynamin-type G domain. The G1 motif stretch occupies residues 270 to 277 (GSQSSGKS). The GTP site is built by S273, S274, G275, K276, S277, S278, and G292. Residue S277 participates in Mg(2+) binding. Positions 296 to 298 (VTR) are G2 motif. Mg(2+) is bound by residues T297 and D370. The tract at residues 370 to 373 (DLPG) is G3 motif. The segment at 438-441 (TKMD) is G4 motif. GTP-binding residues include K439, D441, and S468. The G5 motif stretch occupies residues 467-470 (ISRI). Residues 691 to 805 (ATSEQVENCV…VLKSRACKHK (115 aa)) are paddle region. C802 and C811 are joined by a disulfide. One can recognise a GED domain in the interval 805–898 (KEAKYTCPEI…KINSLVILEQ (94 aa)).

The protein belongs to the TRAFAC class dynamin-like GTPase superfamily. Dynamin/Fzo/YdjA family. Homooligomer. Interacts with cdr1. In terms of processing, cleavage of the transit peptide by mitochondrial processing protease (MPP) produces a long integral membrane form of msp1 (l-msp1). Further processing by a rhomboid protease after the transmembrane regions produces a short peripheral membrane form of msp1 (s-msp1). Both isoforms are required for full activity.

It localises to the mitochondrion inner membrane. The protein resides in the mitochondrion intermembrane space. It carries out the reaction GTP + H2O = GDP + phosphate + H(+). Functionally, dynamin-related GTPase that is essential for normal mitochondrial morphology by mediating fusion of the mitochondrial inner membranes and maintaining respiratory chain function. Exists in two forms: the transmembrane, long form (Dynamin-like GTPase msp1, long form; l-msp1), which is tethered to the inner mitochondrial membrane, and the short soluble form (Dynamin-like GTPase msp1, short form; s-msp1), which results from proteolytic cleavage and localizes in the intermembrane space. Both forms (l-msp1 and s-msp1) cooperate to catalyze the fusion of the mitochondrial inner membrane. Its role in mitochondrial morphology is required for mitochondrial genome maintenance. Its function is as follows. Constitutes the transmembrane long form (l-msp1) that plays a central role in mitochondrial inner membrane fusion. L-msp1 and the soluble short form (s-msp1) form higher-order helical assemblies that coordinate the fusion of mitochondrial inner membranes. Inner membrane-anchored l-msp1 molecules initiate membrane remodeling by recruiting soluble s-msp1 to rapidly polymerize into a flexible cylindrical scaffold encaging the mitochondrial inner membrane. Once at the membrane surface, the formation of s-msp1 helices induce bilayer curvature. Msp1 dimerization through the paddle region, which inserts into cardiolipin-containing membrane, promotes GTP hydrolysis and the helical assembly of a flexible msp1 lattice on the membrane, which drives membrane curvature and mitochondrial fusion. In terms of biological role, constitutes the soluble short form (s-msp1) generated by cleavage, which plays a central role in mitochondrial inner membrane fusion. The transmembrane long form (l-msp1) and the s-msp1 form higher-order helical assemblies that coordinate the fusion of mitochondrial inner membranes. Inner membrane-anchored l-msp1 molecules initiate membrane remodeling by recruiting soluble s-msp1 to rapidly polymerize into a flexible cylindrical scaffold encaging the mitochondrial inner membrane. Once at the membrane surface, the formation of s-msp1 helices induce bilayer curvature. Msp1 dimerization through the paddle region, which inserts into cardiolipin-containing membrane, promotes GTP hydrolysis and the helical assembly of a flexible msp1 lattice on the membrane, which drives membrane curvature and mitochondrial fusion. In Schizosaccharomyces pombe (strain 972 / ATCC 24843) (Fission yeast), this protein is Dynamin-like GTPase msp1, mitochondrial.